We begin with the raw amino-acid sequence, 370 residues long: Phospho-N-acetylmuramoyl-pentapeptide-transferase (370 aa).

11 helical membrane passes run 15-35 (PLEG…AAFA), 44-64 (LLSL…WWGV), 93-113 (MGGL…SWSG), 115-135 (AAEQ…VGGI), 155-175 (LLLQ…RGWI), 183-203 (FDIN…VFLA), 213-233 (GLDG…ALQL), 240-260 (GDPS…GFLV), 268-288 (VFMG…VALL), 296-316 (LIMG…VWVF), and 347-367 (QLVV…GIFF).

It belongs to the glycosyltransferase 4 family. MraY subfamily. The cofactor is Mg(2+).

The protein resides in the cell inner membrane. It catalyses the reaction UDP-N-acetyl-alpha-D-muramoyl-L-alanyl-gamma-D-glutamyl-meso-2,6-diaminopimeloyl-D-alanyl-D-alanine + di-trans,octa-cis-undecaprenyl phosphate = di-trans,octa-cis-undecaprenyl diphospho-N-acetyl-alpha-D-muramoyl-L-alanyl-D-glutamyl-meso-2,6-diaminopimeloyl-D-alanyl-D-alanine + UMP. Its pathway is cell wall biogenesis; peptidoglycan biosynthesis. Catalyzes the initial step of the lipid cycle reactions in the biosynthesis of the cell wall peptidoglycan: transfers peptidoglycan precursor phospho-MurNAc-pentapeptide from UDP-MurNAc-pentapeptide onto the lipid carrier undecaprenyl phosphate, yielding undecaprenyl-pyrophosphoryl-MurNAc-pentapeptide, known as lipid I. This is Phospho-N-acetylmuramoyl-pentapeptide-transferase from Synechococcus sp. (strain CC9311).